A 937-amino-acid chain; its full sequence is MTSSVSNLLTSDKETLSLRTWTPKVKPIATVTMIHGLGEHSGRYEHVFSRFAEQGIKVNAFDQRGHGISSGVRGHSPSLEQSLKDIQLIASTAETDVPHFIYGHSFGGCLALHYNLKKKDHHPAGCIVTSPLIKPAIKVSGVKLSMGNLLGGLMPSWTISNSIDPTLISKDSAVVNEYKQDKLVHNKISLGMAKWMLQRSEQLIDLAPQFDTPLLLVHANDDKITCPKASQQFYDRVPSTVDKTLKLWENMYHEVHNEFAKEEFVTYILEWIKERIENAKNESPSSNINTTTTSTTTTTTTTTSSPVVEESKPVVEESKPVVEESKPVVEESKPVVEESKPEPVVDDSKEKEEKERLEKEEAAAKLEKERLEKEEAERVAKEAEEKRIKDEKEAQENLEKQQQEAAAAAQAEKERLEKEEADKLEKERLEAEAAAAAQAEKERLEAEAAAAAQAEKERLEAEAAAAVQAEKERLEKEEADRLEKEKLEAEAAAATQAEKERLEAEAAAAAQAEKERLEKEETERLEKEKLEAEAAAAAQAEKEKLEAEAAAAAQAEKERLEAEAAAAAQAEKERLEAEAAAAAQAEKERLEAEAAAAAQAEKEEAERLEKEKLEAEAAAAQAEKERLEAEAAAAAQAEKERLEAEAAAAAQAEKEKLEAEAEAAAQAEKERLEKEEAERLEKEKLEAEAAAAQAEKERLEAEAAAAAQAEKEKLEAEAAAAQAEKERLEAEAAAAAQAEKERLEKEETERLEKERLEAEAAAAQAEKERLEAEAAAAAQAEKERLEAEAAAEKAAEETKVEEPVQEETKVEEPVQEEIKVEEPVQEETKVEEPVQEETKVEEPVQEETKVEEPVQEETKVEEPVQEETKVEESTTEQAKPTETENKEETEEGEEVDEASNTTTEQTTTNANQPKKPNNNNNNNKGKGKKGKGKGGRK.

At threonine 2 the chain carries N-acetylthreonine. The interval 281-937 is disordered; it reads NESPSSNINT…KKGKGKGGRK (657 aa). Low complexity predominate over residues 290–308; the sequence is TTTTSTTTTTTTTTSSPVV. Catalysis depends on threonine 292, which acts as the Charge relay system. Composition is skewed to basic and acidic residues over residues 309-402, 411-431, 469-489, 512-532, 600-615, 667-687, 738-758, and 780-872; these read EESK…EKQQ, AEKERLEKEEADKLEKERLEA, AEKERLEKEEADRLEKEKLEA, AEKERLEKEETERLEKEKLEA, AEKEEAERLEKEKLEA, AEKERLEKEEAERLEKEKLEA, AEKERLEKEETERLEKERLEA, and AEKE…KVEE. A coiled-coil region spans residues 345–802; it reads VDDSKEKEEK…KAAEETKVEE (458 aa). Acidic residues predominate over residues 887–897; the sequence is EETEEGEEVDE. The segment covering 898–924 has biased composition (low complexity); the sequence is ASNTTTEQTTTNANQPKKPNNNNNNNK. Positions 925–937 are enriched in basic residues; that stretch reads GKGKKGKGKGGRK.

This sequence belongs to the AB hydrolase superfamily.

This is an uncharacterized protein from Dictyostelium discoideum (Social amoeba).